The chain runs to 382 residues: D-galactonate dehydratase (382 aa).

Asp-183 contacts Mg(2+). The active-site Proton donor is the His-185. Mg(2+)-binding residues include Glu-209 and Glu-235. The active-site Proton acceptor is His-285.

Belongs to the mandelate racemase/muconate lactonizing enzyme family. GalD subfamily. Mg(2+) serves as cofactor.

The enzyme catalyses D-galactonate = 2-dehydro-3-deoxy-D-galactonate + H2O. It participates in carbohydrate acid metabolism; D-galactonate degradation; D-glyceraldehyde 3-phosphate and pyruvate from D-galactonate: step 1/3. In terms of biological role, catalyzes the dehydration of D-galactonate to 2-keto-3-deoxy-D-galactonate. In Salmonella choleraesuis (strain SC-B67), this protein is D-galactonate dehydratase.